The sequence spans 332 residues: Lipoyl synthase (332 aa).

Residues C79, C84, C90, C105, C109, C112, and S319 each contribute to the [4Fe-4S] cluster site. The 218-residue stretch at 91–308 (FSHGTATFMI…ADYGYEIGFK (218 aa)) folds into the Radical SAM core domain.

The protein belongs to the radical SAM superfamily. Lipoyl synthase family. [4Fe-4S] cluster serves as cofactor.

It is found in the cytoplasm. The enzyme catalyses [[Fe-S] cluster scaffold protein carrying a second [4Fe-4S](2+) cluster] + N(6)-octanoyl-L-lysyl-[protein] + 2 oxidized [2Fe-2S]-[ferredoxin] + 2 S-adenosyl-L-methionine + 4 H(+) = [[Fe-S] cluster scaffold protein] + N(6)-[(R)-dihydrolipoyl]-L-lysyl-[protein] + 4 Fe(3+) + 2 hydrogen sulfide + 2 5'-deoxyadenosine + 2 L-methionine + 2 reduced [2Fe-2S]-[ferredoxin]. Its pathway is protein modification; protein lipoylation via endogenous pathway; protein N(6)-(lipoyl)lysine from octanoyl-[acyl-carrier-protein]: step 2/2. Functionally, catalyzes the radical-mediated insertion of two sulfur atoms into the C-6 and C-8 positions of the octanoyl moiety bound to the lipoyl domains of lipoate-dependent enzymes, thereby converting the octanoylated domains into lipoylated derivatives. The sequence is that of Lipoyl synthase from Hahella chejuensis (strain KCTC 2396).